The primary structure comprises 128 residues: Aspartate 1-decarboxylase (128 aa).

Serine 25 (schiff-base intermediate with substrate; via pyruvic acid) is an active-site residue. Serine 25 bears the Pyruvic acid (Ser) mark. Substrate is bound at residue threonine 57. Residue tyrosine 58 is the Proton donor of the active site. 73-75 serves as a coordination point for substrate; it reads GAA.

It belongs to the PanD family. Heterooctamer of four alpha and four beta subunits. It depends on pyruvate as a cofactor. Is synthesized initially as an inactive proenzyme, which is activated by self-cleavage at a specific serine bond to produce a beta-subunit with a hydroxyl group at its C-terminus and an alpha-subunit with a pyruvoyl group at its N-terminus.

It localises to the cytoplasm. The catalysed reaction is L-aspartate + H(+) = beta-alanine + CO2. It participates in cofactor biosynthesis; (R)-pantothenate biosynthesis; beta-alanine from L-aspartate: step 1/1. Its function is as follows. Catalyzes the pyruvoyl-dependent decarboxylation of aspartate to produce beta-alanine. This Moorella thermoacetica (strain ATCC 39073 / JCM 9320) protein is Aspartate 1-decarboxylase.